The sequence spans 86 residues: Exodeoxyribonuclease 7 small subunit (86 aa).

Residues 67 to 86 form a disordered region; sequence RVSPASGGATEAPAPAERDR.

The protein belongs to the XseB family. In terms of assembly, heterooligomer composed of large and small subunits.

Its subcellular location is the cytoplasm. The catalysed reaction is Exonucleolytic cleavage in either 5'- to 3'- or 3'- to 5'-direction to yield nucleoside 5'-phosphates.. Functionally, bidirectionally degrades single-stranded DNA into large acid-insoluble oligonucleotides, which are then degraded further into small acid-soluble oligonucleotides. This chain is Exodeoxyribonuclease 7 small subunit, found in Beutenbergia cavernae (strain ATCC BAA-8 / DSM 12333 / CCUG 43141 / JCM 11478 / NBRC 16432 / NCIMB 13614 / HKI 0122).